Reading from the N-terminus, the 473-residue chain is Adhesive plaque matrix protein 2 (473 aa).

The N-terminal stretch at 1–17 (MLFSFFLLLTCTQLCLG) is a signal peptide. Residues Tyr23, Tyr31, Tyr36, and Tyr43 each carry the 3',4'-dihydroxyphenylalanine modification. EGF-like domains lie at 45 to 81 (PVNP…YNCN), 82 to 117 (LKNA…GRLC), 118 to 154 (EKNV…GPRC), 155 to 191 (EVHA…GPTC), 192 to 228 (QENA…GPEC), 229 to 265 (ERYV…GPTC), 266 to 301 (KVNV…GPTC), 302 to 340 (GENV…PTCE), 342 to 378 (KPNP…RHCT), 383 to 420 (KPNP…RHCT), and 425 to 461 (KKNP…RYCS). Cystine bridges form between Cys49–Cys60, Cys54–Cys69, Cys71–Cys80, Cys86–Cys97, Cys91–Cys106, Cys108–Cys117, Cys122–Cys133, Cys127–Cys143, Cys145–Cys154, Cys159–Cys170, Cys164–Cys180, Cys182–Cys191, Cys196–Cys207, Cys201–Cys217, Cys219–Cys228, Cys233–Cys244, Cys238–Cys254, Cys256–Cys265, Cys270–Cys281, Cys275–Cys290, Cys292–Cys301, Cys306–Cys317, Cys311–Cys328, Cys330–Cys339, Cys346–Cys357, Cys351–Cys366, Cys368–Cys377, Cys387–Cys399, Cys393–Cys408, Cys410–Cys419, Cys429–Cys440, Cys434–Cys449, and Cys451–Cys460. N-linked (GlcNAc...) asparagine glycosylation is present at Asn93.

In terms of processing, contains L-DOPA (3',4'-dihydroxyphenylalanine). As to expression, produced by the byssal gland.

The protein localises to the secreted. Its function is as follows. Provides adhesiveness to the mussel's foot. Mussels produce one of the strongest water insoluble glues. The mussel's adhesive is a bundle of threads, called a byssus, formed by a fibrous collagenous core coated with adhesive proteins. The polypeptide is Adhesive plaque matrix protein 2 (FP2) (Mytilus galloprovincialis (Mediterranean mussel)).